The primary structure comprises 307 residues: MKFALRLLSVITTFVMLIVLIGGALVTKTGSGLGCGRQWPLCHGRFFPEMNPASIIEWSHRMSTGVSTILVLALAVLCWKKISPVFRETKFLVIMSIIFLLLQALLGALAVVFGSNALVMALHFGISLISFASVLLLALLVFEATRSETKLVKPLHIGKKMQFHIYGLITYTYIVVYTGAYVRHTKSSLACSVFPFCSKDGALPAYFNQWVQMSHRAAALLLFVWIFVAMFHAMKHYKEQKQLYYGWIISAILITLQAISGVMSVYSQLALGYALAHSFFISCLFGVLCYFCLLIARFKYESKEPFK.

The Cytoplasmic segment spans residues 1–6 (MKFALR). Residues 7–27 (LLSVITTFVMLIVLIGGALVT) traverse the membrane as a helical segment. Over 28-65 (KTGSGLGCGRQWPLCHGRFFPEMNPASIIEWSHRMSTG) the chain is Extracellular. The cysteines at positions 35 and 42 are disulfide-linked. E57 is a catalytic residue. H60 contacts heme o. The helical transmembrane segment at 66-86 (VSTILVLALAVLCWKKISPVF) threads the bilayer. At 87 to 92 (RETKFL) the chain is on the cytoplasmic side. Residues 93 to 113 (VIMSIIFLLLQALLGALAVVF) traverse the membrane as a helical segment. Residues 114–121 (GSNALVMA) lie on the Extracellular side of the membrane. The chain crosses the membrane as a helical span at residues 122-142 (LHFGISLISFASVLLLALLVF). H123 contributes to the heme o binding site. Residues 143 to 161 (EATRSETKLVKPLHIGKKM) are Cytoplasmic-facing. The helical transmembrane segment at 162–182 (QFHIYGLITYTYIVVYTGAYV) threads the bilayer. At 183-216 (RHTKSSLACSVFPFCSKDGALPAYFNQWVQMSHR) the chain is on the extracellular side. C191 and C197 are joined by a disulfide. H215 contacts heme b. The chain crosses the membrane as a helical span at residues 217–237 (AAALLLFVWIFVAMFHAMKHY). The Cytoplasmic segment spans residues 238–242 (KEQKQ). A helical membrane pass occupies residues 243 to 263 (LYYGWIISAILITLQAISGVM). The Extracellular portion of the chain corresponds to 264–274 (SVYSQLALGYA). Residues 275 to 295 (LAHSFFISCLFGVLCYFCLLI) traverse the membrane as a helical segment. H277 contacts heme b. Topologically, residues 296-307 (ARFKYESKEPFK) are cytoplasmic.

Belongs to the COX15/CtaA family. Type 1 subfamily. As to quaternary structure, interacts with CtaB. It depends on heme b as a cofactor.

It is found in the cell membrane. It catalyses the reaction Fe(II)-heme o + 2 A + H2O = Fe(II)-heme a + 2 AH2. It participates in porphyrin-containing compound metabolism; heme A biosynthesis; heme A from heme O: step 1/1. In terms of biological role, catalyzes the conversion of heme O to heme A by two successive hydroxylations of the methyl group at C8. The first hydroxylation forms heme I, the second hydroxylation results in an unstable dihydroxymethyl group, which spontaneously dehydrates, resulting in the formyl group of heme A. The chain is Heme A synthase from Bacillus pumilus (strain SAFR-032).